The chain runs to 505 residues: ATP synthase subunit alpha (505 aa).

Position 171-178 (Gly-171–Thr-178) interacts with ATP.

It belongs to the ATPase alpha/beta chains family. F-type ATPases have 2 components, CF(1) - the catalytic core - and CF(0) - the membrane proton channel. CF(1) has five subunits: alpha(3), beta(3), gamma(1), delta(1), epsilon(1). CF(0) has three main subunits: a(1), b(2) and c(9-12). The alpha and beta chains form an alternating ring which encloses part of the gamma chain. CF(1) is attached to CF(0) by a central stalk formed by the gamma and epsilon chains, while a peripheral stalk is formed by the delta and b chains.

It localises to the cell inner membrane. The enzyme catalyses ATP + H2O + 4 H(+)(in) = ADP + phosphate + 5 H(+)(out). Its function is as follows. Produces ATP from ADP in the presence of a proton gradient across the membrane. The alpha chain is a regulatory subunit. This is ATP synthase subunit alpha from Campylobacter hominis (strain ATCC BAA-381 / DSM 21671 / CCUG 45161 / LMG 19568 / NCTC 13146 / CH001A).